The primary structure comprises 78 residues: U-scoloptoxin(15)-Ssm2a (78 aa).

A signal peptide spans 1 to 23 (MEKKIIFLCFFVSLLTLPEFISS). Residues 34–37 (PEKK) form an important for inhibition of KCNQ4 region. 2 disulfides stabilise this stretch: C44–C70 and C48–C72.

This sequence belongs to the SLPTX(15) family. In terms of tissue distribution, expressed by the venom gland.

Its subcellular location is the secreted. This Scolopendra mutilans (Chinese red-headed centipede) protein is U-scoloptoxin(15)-Ssm2a.